The sequence spans 479 residues: Aspartyl/glutamyl-tRNA(Asn/Gln) amidotransferase subunit B (479 aa).

Belongs to the GatB/GatE family. GatB subfamily. Heterotrimer of A, B and C subunits.

The catalysed reaction is L-glutamyl-tRNA(Gln) + L-glutamine + ATP + H2O = L-glutaminyl-tRNA(Gln) + L-glutamate + ADP + phosphate + H(+). It catalyses the reaction L-aspartyl-tRNA(Asn) + L-glutamine + ATP + H2O = L-asparaginyl-tRNA(Asn) + L-glutamate + ADP + phosphate + 2 H(+). Allows the formation of correctly charged Asn-tRNA(Asn) or Gln-tRNA(Gln) through the transamidation of misacylated Asp-tRNA(Asn) or Glu-tRNA(Gln) in organisms which lack either or both of asparaginyl-tRNA or glutaminyl-tRNA synthetases. The reaction takes place in the presence of glutamine and ATP through an activated phospho-Asp-tRNA(Asn) or phospho-Glu-tRNA(Gln). The protein is Aspartyl/glutamyl-tRNA(Asn/Gln) amidotransferase subunit B of Streptococcus pyogenes serotype M4 (strain MGAS10750).